The primary structure comprises 278 residues: Hydroxyethylthiazole kinase (278 aa).

Met-49 is a binding site for substrate. The ATP site is built by Asn-125 and Ser-171. Gly-198 is a binding site for substrate.

It belongs to the Thz kinase family. The cofactor is Mg(2+).

It catalyses the reaction 5-(2-hydroxyethyl)-4-methylthiazole + ATP = 4-methyl-5-(2-phosphooxyethyl)-thiazole + ADP + H(+). It participates in cofactor biosynthesis; thiamine diphosphate biosynthesis; 4-methyl-5-(2-phosphoethyl)-thiazole from 5-(2-hydroxyethyl)-4-methylthiazole: step 1/1. Catalyzes the phosphorylation of the hydroxyl group of 4-methyl-5-beta-hydroxyethylthiazole (THZ). The sequence is that of Hydroxyethylthiazole kinase from Natronomonas pharaonis (strain ATCC 35678 / DSM 2160 / CIP 103997 / JCM 8858 / NBRC 14720 / NCIMB 2260 / Gabara) (Halobacterium pharaonis).